The primary structure comprises 103 residues: U-scoloptoxin(24)-Er1a (103 aa).

The signal sequence occupies residues 1–23 (MVKSLHCLIGIVLFLAILNAGNG).

It belongs to the scoloptoxin-24 family. In terms of processing, contains 1 disulfide bond. In terms of tissue distribution, expressed by the venom gland.

Its subcellular location is the secreted. This Ethmostigmus rubripes (Giant centipede) protein is U-scoloptoxin(24)-Er1a.